Consider the following 398-residue polypeptide: Phosphoglycerate kinase (398 aa).

Substrate contacts are provided by residues 21 to 23, R36, 59 to 62, R119, and R157; these read DFN and HLGR. Residues K208, G296, E327, and 354 to 357 each bind ATP; that span reads GGDS.

This sequence belongs to the phosphoglycerate kinase family. As to quaternary structure, monomer.

The protein localises to the cytoplasm. The enzyme catalyses (2R)-3-phosphoglycerate + ATP = (2R)-3-phospho-glyceroyl phosphate + ADP. It participates in carbohydrate degradation; glycolysis; pyruvate from D-glyceraldehyde 3-phosphate: step 2/5. This chain is Phosphoglycerate kinase, found in Streptococcus pneumoniae (strain Taiwan19F-14).